The following is an 890-amino-acid chain: Alanine--tRNA ligase (890 aa).

Zn(2+) contacts are provided by histidine 564, histidine 568, cysteine 677, and histidine 681.

The protein belongs to the class-II aminoacyl-tRNA synthetase family. It depends on Zn(2+) as a cofactor.

It is found in the cytoplasm. It catalyses the reaction tRNA(Ala) + L-alanine + ATP = L-alanyl-tRNA(Ala) + AMP + diphosphate. Its function is as follows. Catalyzes the attachment of alanine to tRNA(Ala) in a two-step reaction: alanine is first activated by ATP to form Ala-AMP and then transferred to the acceptor end of tRNA(Ala). Also edits incorrectly charged Ser-tRNA(Ala) and Gly-tRNA(Ala) via its editing domain. This Rhodopseudomonas palustris (strain BisB18) protein is Alanine--tRNA ligase.